A 114-amino-acid chain; its full sequence is Ribulose bisphosphate carboxylase small subunit 2 (114 aa).

The protein belongs to the RuBisCO small chain family. Heterohexadecamer of 8 large and 8 small subunits. Forms a CsoS2-CsoS1-RuBisCO complex.

The protein localises to the carboxysome. Its function is as follows. RuBisCO catalyzes two reactions: the carboxylation of D-ribulose 1,5-bisphosphate, the primary event in carbon dioxide fixation, as well as the oxidative fragmentation of the pentose substrate. Both reactions occur simultaneously and in competition at the same active site. Although the small subunit is not catalytic it is essential for maximal activity. Replacing the endogenous type I ccbLS genes in H.neapolitanus with this carboxysomally targeted enzyme reconstitutes RuBisCO with about 25% of normal activity; the active enzyme is targeted to carboxysomes. The protein is Ribulose bisphosphate carboxylase small subunit 2 of Hydrogenovibrio crunogenus (strain DSM 25203 / XCL-2) (Thiomicrospira crunogena).